We begin with the raw amino-acid sequence, 478 residues long: Transcript termination protein A18 (478 aa).

The region spanning 98 to 254 (KLSTHRPMYM…NDVVNVLKVS (157 aa)) is the Helicase ATP-binding domain. 111 to 118 (LSCGFGKT) is an ATP binding site. A DESH box motif is present at residues 204–207 (DESH). The Helicase C-terminal domain maps to 302–468 (PRNNLIVETV…GIEGTKEEPV (167 aa)).

It belongs to the helicase family. Poxviruses subfamily. Interacts with G2. Might be part of a transcription complex composed at least of G2, A18, and H5.

The protein localises to the virion. DNA helicase which seems to act as a postreplicative transcription termination factor. Involved in ATP-dependent release of nascent RNA. Forms a stable complex with single-stranded DNA, and to a lesser extent RNA. This Rabbit fibroma virus (strain Kasza) (RFV) protein is Transcript termination protein A18.